Consider the following 1058-residue polypeptide: Carbamoyl phosphate synthase large chain (1058 aa).

Residues 1-401 form a carboxyphosphate synthetic domain region; that stretch reads MPKRKDIQKI…SLLKACRSLE (401 aa). The ATP site is built by R129, R169, G175, G176, R208, I210, E215, G241, I242, H243, Q284, and E298. The ATP-grasp 1 domain maps to 133-327; the sequence is KQLMQELDQP…IAKLAAKIAV (195 aa). Mg(2+)-binding residues include Q284, E298, and N300. 3 residues coordinate Mn(2+): Q284, E298, and N300. Residues 402–546 form an oligomerization domain region; it reads IGVCHNEMTS…YSTYELENES (145 aa). Positions 547–929 are carbamoyl phosphate synthetic domain; that stretch reads VQSNKESILV…ALYKAFEANN (383 aa). The ATP-grasp 2 domain occupies 671–861; sequence EKALKELGIP…MAQIATKLIL (191 aa). The ATP site is built by R707, S746, I748, E752, G777, V778, H779, S780, Q820, and E832. Positions 820, 832, and 834 each coordinate Mg(2+). 3 residues coordinate Mn(2+): Q820, E832, and N834. Positions 930 to 1058 constitute an MGS-like domain; that stretch reads SHLSEFGQIV…ESRCFNIEAI (129 aa). The segment at 930-1058 is allosteric domain; sequence SHLSEFGQIV…ESRCFNIEAI (129 aa).

Belongs to the CarB family. As to quaternary structure, composed of two chains; the small (or glutamine) chain promotes the hydrolysis of glutamine to ammonia, which is used by the large (or ammonia) chain to synthesize carbamoyl phosphate. Tetramer of heterodimers (alpha,beta)4. The cofactor is Mg(2+). Mn(2+) serves as cofactor.

The enzyme catalyses hydrogencarbonate + L-glutamine + 2 ATP + H2O = carbamoyl phosphate + L-glutamate + 2 ADP + phosphate + 2 H(+). The catalysed reaction is hydrogencarbonate + NH4(+) + 2 ATP = carbamoyl phosphate + 2 ADP + phosphate + 2 H(+). The protein operates within amino-acid biosynthesis; L-arginine biosynthesis; carbamoyl phosphate from bicarbonate: step 1/1. It functions in the pathway pyrimidine metabolism; UMP biosynthesis via de novo pathway; (S)-dihydroorotate from bicarbonate: step 1/3. In terms of biological role, large subunit of the glutamine-dependent carbamoyl phosphate synthetase (CPSase). CPSase catalyzes the formation of carbamoyl phosphate from the ammonia moiety of glutamine, carbonate, and phosphate donated by ATP, constituting the first step of 2 biosynthetic pathways, one leading to arginine and/or urea and the other to pyrimidine nucleotides. The large subunit (synthetase) binds the substrates ammonia (free or transferred from glutamine from the small subunit), hydrogencarbonate and ATP and carries out an ATP-coupled ligase reaction, activating hydrogencarbonate by forming carboxy phosphate which reacts with ammonia to form carbamoyl phosphate. This is Carbamoyl phosphate synthase large chain from Streptococcus pyogenes serotype M3 (strain ATCC BAA-595 / MGAS315).